Here is a 150-residue protein sequence, read N- to C-terminus: Monothiol glutaredoxin-5, mitochondrial (150 aa).

The N-terminal 29 residues, 1 to 29 (MFLPKFNPIRSFSPILRAKTLLRYQNRMY), are a transit peptide targeting the mitochondrion. The Glutaredoxin domain occupies 35 to 140 (RKAIEDAIES…DLLEEAQALV (106 aa)). Residue lysine 52 coordinates glutathione. Residue cysteine 60 coordinates [2Fe-2S] cluster. Glutathione contacts are provided by residues 92–96 (REGIK), isoleucine 104, and 117–118 (CD).

This sequence belongs to the glutaredoxin family. Monothiol subfamily. As to quaternary structure, homodimer. Interacts with SSQ1. Interacts with BOL1.

Its subcellular location is the mitochondrion matrix. Its function is as follows. Monothiol glutaredoxin involved in mitochondrial iron-sulfur (Fe/S) cluster transfer. Receives 2Fe/2S clusters from scaffold protein ISU1 and mediates their transfer to apoproteins, to the 4Fe/FS cluster biosynthesis machinery, or export from mitochondrion. This Saccharomyces cerevisiae (strain ATCC 204508 / S288c) (Baker's yeast) protein is Monothiol glutaredoxin-5, mitochondrial.